We begin with the raw amino-acid sequence, 467 residues long: Putative laccase-16 (467 aa).

Plastocyanin-like domains lie at 7–88 (VLGS…PKHG), 98–225 (KEIP…YTDS), and 318–451 (DFPN…KDGK). Residues His-22, His-24, His-67, and His-69 each coordinate Cu cation. Cu cation contacts are provided by His-368, His-371, His-373, His-430, Cys-431, His-432, His-436, and Met-441.

It belongs to the multicopper oxidase family. Cu cation is required as a cofactor.

The protein localises to the secreted. The protein resides in the extracellular space. It localises to the apoplast. The enzyme catalyses 4 hydroquinone + O2 = 4 benzosemiquinone + 2 H2O. Functionally, lignin degradation and detoxification of lignin-derived products. This is Putative laccase-16 (LAC16) from Oryza sativa subsp. japonica (Rice).